Here is a 318-residue protein sequence, read N- to C-terminus: 1-aminocyclopropane-1-carboxylate oxidase (318 aa).

A Fe2OG dioxygenase domain is found at 151 to 251 (PTFGTKVSNY…RMSIASFYNP (101 aa)). Residues histidine 175, aspartate 177, and histidine 232 each coordinate Fe cation.

This sequence belongs to the iron/ascorbate-dependent oxidoreductase family. The cofactor is Fe cation.

It carries out the reaction 1-aminocyclopropane-1-carboxylate + L-ascorbate + O2 = ethene + L-dehydroascorbate + hydrogen cyanide + CO2 + 2 H2O. The protein operates within alkene biosynthesis; ethylene biosynthesis via S-adenosyl-L-methionine; ethylene from S-adenosyl-L-methionine: step 2/2. The chain is 1-aminocyclopropane-1-carboxylate oxidase (ACO) from Dendrobium crumenatum (Tropical pigeon orchid).